Consider the following 652-residue polypeptide: 1,4-alpha-glucan branching enzyme GlgB (652 aa).

Asp322 functions as the Nucleophile in the catalytic mechanism. Catalysis depends on Glu373, which acts as the Proton donor.

This sequence belongs to the glycosyl hydrolase 13 family. GlgB subfamily. In terms of assembly, monomer.

It carries out the reaction Transfers a segment of a (1-&gt;4)-alpha-D-glucan chain to a primary hydroxy group in a similar glucan chain.. Its pathway is glycan biosynthesis; glycogen biosynthesis. In terms of biological role, catalyzes the formation of the alpha-1,6-glucosidic linkages in glycogen by scission of a 1,4-alpha-linked oligosaccharide from growing alpha-1,4-glucan chains and the subsequent attachment of the oligosaccharide to the alpha-1,6 position. This Deinococcus geothermalis (strain DSM 11300 / CIP 105573 / AG-3a) protein is 1,4-alpha-glucan branching enzyme GlgB.